The primary structure comprises 497 residues: tRNA (adenine(58)-N(1))-methyltransferase non-catalytic subunit TRM6 (497 aa).

A disordered region spans residues 81–103; the sequence is LEEPASETKEAGTDNRNIVDDGK. Positions 95–105 are substrate; it reads NRNIVDDGKSQ. Threonine 108 is modified (phosphothreonine). Substrate stretches follow at residues 146–155 and 176–183; these read KYIKKKKKKY and REPGKINH. Residues 275–354 are disordered; that stretch reads MLSSEPKDST…EKQRRQEEQR (80 aa). Residues 289-307 are compositionally biased toward acidic residues; that stretch reads SNGELEEKEIAEQADEDNI. Residues 328–354 show a composition bias toward basic and acidic residues; that stretch reads PENKEPKEKRSKRDYIQEKQRRQEEQR. Residues arginine 349 and arginine 377 each coordinate substrate. 2 substrate regions span residues 415 to 423 and 434 to 441; these read RERGGVINL and QVLPDRSH. Positions 474-497 are disordered; the sequence is TGALDPHKAEEPAAKKQKCMESAS. Positions 478–487 are enriched in basic and acidic residues; that stretch reads DPHKAEEPAA.

The protein belongs to the TRM6/GCD10 family. Heterotetramer; composed of two copies of TRMT6 and two copies of TRMT61A.

It is found in the nucleus. Functionally, substrate-binding subunit of tRNA (adenine-N(1)-)-methyltransferase, which catalyzes the formation of N(1)-methyladenine at position 58 (m1A58) in initiator methionyl-tRNA. Together with the TRMT61A catalytic subunit, part of a mRNA N(1)-methyltransferase complex that mediates methylation of adenosine residues at the N(1) position of a small subset of mRNAs: N(1) methylation takes place in tRNA T-loop-like structures of mRNAs and is only present at low stoichiometries. The sequence is that of tRNA (adenine(58)-N(1))-methyltransferase non-catalytic subunit TRM6 (Trmt6) from Mus musculus (Mouse).